The chain runs to 226 residues: Cytidylate kinase (226 aa).

ATP is bound at residue 10–18 (GPASSGKST).

Belongs to the cytidylate kinase family. Type 1 subfamily.

It is found in the cytoplasm. It carries out the reaction CMP + ATP = CDP + ADP. The catalysed reaction is dCMP + ATP = dCDP + ADP. In Streptococcus thermophilus (strain CNRZ 1066), this protein is Cytidylate kinase.